The following is a 245-amino-acid chain: tRNA1(Val) (adenine(37)-N6)-methyltransferase (245 aa).

The protein belongs to the methyltransferase superfamily. tRNA (adenine-N(6)-)-methyltransferase family.

It localises to the cytoplasm. The enzyme catalyses adenosine(37) in tRNA1(Val) + S-adenosyl-L-methionine = N(6)-methyladenosine(37) in tRNA1(Val) + S-adenosyl-L-homocysteine + H(+). Its function is as follows. Specifically methylates the adenine in position 37 of tRNA(1)(Val) (anticodon cmo5UAC). This chain is tRNA1(Val) (adenine(37)-N6)-methyltransferase, found in Klebsiella pneumoniae (strain 342).